The primary structure comprises 761 residues: Cyclin-F (761 aa).

The Nuclear localization signal 1 signature appears at 19 to 27 (RRRIKRRPR). An F-box domain is found at 28–75 (VLTLLSLPEDVLLYVLECLPAVDILSMREVHPHLRSLVDSHSSVWARA). The region spanning 300–411 (NKSSIFTTQK…EIISALEGKI (112 aa)) is the Cyclin N-terminal domain. 2 short sequence motifs (d box) span residues 316 to 319 (RYIL) and 355 to 358 (RAKL). Disordered regions lie at residues 575 to 594 (NKTK…SFVT) and 677 to 761 (AENG…SDEL). The segment covering 580-590 (RREESIQEDRG) has biased composition (basic and acidic residues). Positions 589 to 745 (RGSFVTTPTA…LLKASRRQVK (157 aa)) are PEST. Low complexity predominate over residues 691-718 (SSGYSSVSSGGSPTSSSSPGLPFTPTPG). Over residues 739–749 (ASRRQVKRKNQ) the composition is skewed to basic residues.

This sequence belongs to the cyclin family. Cyclin AB subfamily. As to quaternary structure, component of the SCF(CCNF) complex.

It is found in the nucleus. Its subcellular location is the cytoplasm. The protein resides in the perinuclear region. It localises to the cytoskeleton. The protein localises to the microtubule organizing center. It is found in the centrosome. Its subcellular location is the centriole. Substrate recognition component of the SCF(CCNF) E3 ubiquitin-protein ligase complex which mediates the ubiquitination and subsequent proteasomal degradation of target proteins. The SCF(CCNF) E3 ubiquitin-protein ligase complex is an integral component of the ubiquitin proteasome system (UPS) and links proteasome degradation to the cell cycle. Mediates the substrate recognition and the proteasomal degradation of various target proteins during G2 phase involved in the regulation of cell cycle progression and in the maintenance of genome stability. The polypeptide is Cyclin-F (ccnf) (Xenopus laevis (African clawed frog)).